A 1496-amino-acid polypeptide reads, in one-letter code: Rap guanine nucleotide exchange factor 2 (1496 aa).

Disordered stretches follow at residues 40 to 59 and 68 to 101; these read HVSSSHSGCSITSDSGSSSL and SEAGDMDLSGLPETAVDSEDDDDEEDIERASDPL. Acidic residues predominate over residues 83-94; the sequence is VDSEDDDDEEDI. 135-254 is an a nucleoside 3',5'-cyclic phosphate binding site; the sequence is AFANMTMSVR…VEEEGEIVMV (120 aa). The N-terminal Ras-GEF domain occupies 267 to 380; the sequence is KGHIVIKGTS…RLLNIACAAK (114 aa). The PDZ domain maps to 385 to 470; it reads LMTLTKPSRE…ITVKTNLFVF (86 aa). Phosphoserine is present on serine 501. The Ras-associating domain occupies 606 to 692; the sequence is PDQVLRVFKA…GRYYLKNNME (87 aa). Phosphothreonine; by PLK2 is present on threonine 644. A Ras-GEF domain is found at 717–944; the sequence is STVEVATQLS…SQGSANATVL (228 aa). At serine 806 the chain carries Phosphoserine; by PLK2. Phosphoserine is present on serine 930. Serine 933 and serine 1022 each carry phosphoserine; by PLK2. Residues 1002-1051 are disordered; sequence PATSTLPKNPGDKKPVKSETSPVAPRAGPQQKVQPQQPLAQPQPPHKVSQ. Over residues 1030–1041 the composition is skewed to low complexity; sequence PQQKVQPQQPLA. 6 positions are modified to phosphoserine: serine 1079, serine 1088, serine 1094, serine 1115, serine 1119, and serine 1158. The segment at 1093–1159 is disordered; the sequence is GSLERHRKQA…RSSIVSNSSF (67 aa). Composition is skewed to low complexity over residues 1110-1124 and 1140-1159; these read SSQLSSPPTSPQSSP and SDSGHSEISSRSSIVSNSSF. Serine 1175 carries the post-translational modification Phosphoserine; by PLK2. Disordered regions lie at residues 1224–1256, 1303–1369, and 1390–1496; these read STEELSHDQGDRASLDAADSGRGSWTSCSSGSH, STKY…EEAK, and RKEG…VSAV. The span at 1227–1237 shows a compositional bias: basic and acidic residues; the sequence is ELSHDQGDRAS. Composition is skewed to polar residues over residues 1246–1256 and 1306–1330; these read GSWTSCSSGSH and YNRQNQSRESLEQAQSRASWASSTG. The span at 1440-1455 shows a compositional bias: low complexity; the sequence is PTEAPAPGQTPPAAAA. Positions 1485-1496 are enriched in acidic residues; it reads AEEDEDEQVSAV.

The protein belongs to the RAPGEF2 family. Found in a complex, at least composed of KIDINS220, MAGI2, NTRK1 and RAPGEF2; the complex is mainly formed at late endosomes in a neuronal growth factor (NGF)-dependent manner. Interacts (via C-terminal domain) with NEDD4 (via WW domains); this interaction leads to ubiquitination and degradation via the proteasome pathway in a cAMP-independent manner. Interacts with MAGI1 (via PDZ domain). Interacts with ADRB1 (via C-terminal PDZ motif); the interaction is direct. Interacts (via Ras-associating domain) with RAP1A (via GTP-bound active form). Interacts weakly with HRAS (via GDP- and GTP-bound forms). Interacts (via C-terminal domain) with MAGI2 (via PDZ and WW domains). Interacts with CDH1, CTNNB1 and TJP1. Post-translationally, ubiquitinated by NEDD4, leading to proteasomal degradation. Phosphorylation by PLK2 promotes its activity. Expressed in all layers of the cerebral cortex, hippocampus and cerebellum. Expressed in the cortical plate, cingulate cortex and the subventricular zone. Expressed in neurons and endocrine cells (at protein level). Expressed in melanoma cells.

It localises to the cytoplasm. The protein resides in the perinuclear region. The protein localises to the cell membrane. Its subcellular location is the late endosome. It is found in the cell junction. Its function is as follows. Functions as a guanine nucleotide exchange factor (GEF), which activates Rap and Ras family of small GTPases by exchanging bound GDP for free GTP in a cAMP-dependent manner. Serves as a link between cell surface receptors and Rap/Ras GTPases in intracellular signaling cascades. Also acts as an effector for Rap1 by direct association with Rap1-GTP thereby leading to the amplification of Rap1-mediated signaling. Shows weak activity on HRAS. It is controversial whether RAPGEF2 binds cAMP and cGMP or not. Its binding to ligand-activated beta-1 adrenergic receptor ADRB1 leads to the Ras activation through the G(s)-alpha signaling pathway. Involved in the cAMP-induced Ras and Erk1/2 signaling pathway that leads to sustained inhibition of long term melanogenesis by reducing dendrite extension and melanin synthesis. Also provides inhibitory signals for cell proliferation of melanoma cells and promotes their apoptosis in a cAMP-independent nanner. Regulates cAMP-induced neuritogenesis by mediating the Rap1/B-Raf/ERK signaling through a pathway that is independent on both PKA and RAPGEF3/RAPGEF4. Involved in neuron migration and in the formation of the major forebrain fiber connections forming the corpus callosum, the anterior commissure and the hippocampal commissure during brain development. Involved in neuronal growth factor (NGF)-induced sustained activation of Rap1 at late endosomes and in brain-derived neurotrophic factor (BDNF)-induced axon outgrowth of hippocampal neurons. Plays a role in the regulation of embryonic blood vessel formation and in the establishment of basal junction integrity and endothelial barrier function. May be involved in the regulation of the vascular endothelial growth factor receptor KDR and cadherin CDH5 expression at allantois endothelial cell-cell junctions. The protein is Rap guanine nucleotide exchange factor 2 (Rapgef2) of Mus musculus (Mouse).